Consider the following 386-residue polypeptide: Hydrazine synthase subunit beta (386 aa).

The first 34 residues, 1–34 (MVIRRKMNKMIRKGMIGAVMLGAAVAISGGVATA), serve as a signal peptide directing secretion.

Part of the hydrazine synthase complex that forms an elongated dimer of heterotrimers composed of one alpha, one beta and one gamma subunit.

The protein resides in the anammoxosome. The protein operates within nitrogen metabolism. In terms of biological role, component of the hydrazine synthase complex that catalyzes the condensation of nitric oxide (NO) with ammonium to form hydrazine. The beta subunit may play a role in modulating transport of the hydroxylamine intermediate through a tunnel between the gamma and alpha subunit's active site. Is involved in anaerobic ammonium oxidation (anammox), a biological process in which nitrite is used as the electron acceptor in the conversion of ammonium to dinitrogen gas (N2) and water; this bacterial process has a major role in the Earth's nitrogen cycle and has been estimated to synthesize up to 50% of the dinitrogen gas emitted into our atmosphere from the oceans. The protein is Hydrazine synthase subunit beta of Kuenenia stuttgartiensis.